Consider the following 193-residue polypeptide: Activity-regulated cytoskeleton associated protein 2 (193 aa).

This sequence belongs to the ARC/ARG3.1 family. As to quaternary structure, homooligomer; homooligomerizes into virion-like capsids.

The protein resides in the extracellular vesicle membrane. Its function is as follows. Self-assembles into virion-like capsids that encapsulate RNAs and mediate intercellular RNA transfer. Arc2 protein is released from cells in extracellular vesicles that mediate the transfer of mRNA into neighboring cells. This is Activity-regulated cytoskeleton associated protein 2 from Drosophila melanogaster (Fruit fly).